The primary structure comprises 113 residues: U11-theraphotoxin-Hhn1a (113 aa).

A signal peptide spans 1–21; it reads MNTVRVTFLLVFVLAVSLGQA. Positions 22-74 are excised as a propeptide; it reads DKDENRMEMQKKTEQGKSYLDFAENLLLQKLEELEAKLLEEDSEESRNSRQKR. 3 cysteine pairs are disulfide-bonded: Cys75–Cys90, Cys82–Cys95, and Cys89–Cys110.

The protein belongs to the neurotoxin 14 (magi-1) family. 01 (HNTX-16) subfamily. Expressed by the venom gland.

The protein resides in the secreted. Its function is as follows. Probable ion channel inhibitor. This chain is U11-theraphotoxin-Hhn1a, found in Cyriopagopus hainanus (Chinese bird spider).